The following is a 571-amino-acid chain: Quinone-dependent D-lactate dehydrogenase (571 aa).

Residues 44-273 (GGGPVFAVVR…FAVRTRTFPR (230 aa)) enclose the FAD-binding PCMH-type domain. Residues 78–82 (ASNTG), 86–87 (GS), Gly145, Ser152, Gly162, and Val263 each bind FAD.

Belongs to the quinone-dependent D-lactate dehydrogenase family. FAD serves as cofactor.

The protein resides in the cell membrane. It carries out the reaction (R)-lactate + a quinone = a quinol + pyruvate. In terms of biological role, catalyzes the oxidation of D-lactate to pyruvate. Also has weak activity with L-lactate and DL-2-hydroxybutyrate. Electrons derived from D-lactate oxidation enter the electron transport chain. Essential for growth with D-lactate as sole carbon and energy source. This Corynebacterium glutamicum (strain ATCC 13032 / DSM 20300 / JCM 1318 / BCRC 11384 / CCUG 27702 / LMG 3730 / NBRC 12168 / NCIMB 10025 / NRRL B-2784 / 534) protein is Quinone-dependent D-lactate dehydrogenase.